A 335-amino-acid chain; its full sequence is Carboxylesterase 1 (335 aa).

An Involved in the stabilization of the negatively charged intermediate by the formation of the oxyanion hole motif is present at residues 90–92 (HGG). Paraoxon-binding positions include 92–93 (GG), S169, and A170. S169 is a catalytic residue. Active-site residues include D276 and H306.

It belongs to the 'GDXG' lipolytic enzyme family.

It catalyses the reaction a carboxylic ester + H2O = an alcohol + a carboxylate + H(+). With respect to regulation, is inhibited by the organophosphates paraoxon and dimethylchlorophosphate (DMCP). Its function is as follows. Carboxylesterase acting on esters with varying acyl chain length. The polypeptide is Carboxylesterase 1 (CXE1) (Actinidia eriantha (Velvet vine)).